A 58-amino-acid chain; its full sequence is Ribulose bisphosphate carboxylase large chain (58 aa).

The propeptide occupies 1–2 (MS). P3 is modified (N-acetylproline). K14 is subject to N6,N6,N6-trimethyllysine.

It belongs to the RuBisCO large chain family. Type I subfamily. In terms of assembly, heterohexadecamer of 8 large chains and 8 small chains.

Its subcellular location is the plastid. The protein localises to the chloroplast. The enzyme catalyses 2 (2R)-3-phosphoglycerate + 2 H(+) = D-ribulose 1,5-bisphosphate + CO2 + H2O. The catalysed reaction is D-ribulose 1,5-bisphosphate + O2 = 2-phosphoglycolate + (2R)-3-phosphoglycerate + 2 H(+). RuBisCO catalyzes two reactions: the carboxylation of D-ribulose 1,5-bisphosphate, the primary event in carbon dioxide fixation, as well as the oxidative fragmentation of the pentose substrate in the photorespiration process. Both reactions occur simultaneously and in competition at the same active site. This Euonymus maackii (Maack's spindle tree) protein is Ribulose bisphosphate carboxylase large chain (rbcL).